Here is a 160-residue protein sequence, read N- to C-terminus: Cytochrome b6-f complex subunit 4 (160 aa).

A run of 3 helical transmembrane segments spans residues 36–56, 95–115, and 127–147; these read LLYIFPVVILGTLACVIGLSV, LLGVLSMAAVPVGLITVPFIE, and PVAMTVFVFSVVFAIWLGIGA.

It belongs to the cytochrome b family. PetD subfamily. The 4 large subunits of the cytochrome b6-f complex are cytochrome b6, subunit IV (17 kDa polypeptide, petD), cytochrome f and the Rieske protein, while the 4 small subunits are petG, petL, petM and petN. The complex functions as a dimer.

Its subcellular location is the plastid. It is found in the chloroplast thylakoid membrane. Component of the cytochrome b6-f complex, which mediates electron transfer between photosystem II (PSII) and photosystem I (PSI), cyclic electron flow around PSI, and state transitions. The chain is Cytochrome b6-f complex subunit 4 from Guillardia theta (Cryptophyte).